The chain runs to 130 residues: Protein ApaG (130 aa).

The region spanning 3–127 is the ApaG domain; sequence RAVTRQIEVL…FSLDSPDIRR (125 aa).

The chain is Protein ApaG from Afipia carboxidovorans (strain ATCC 49405 / DSM 1227 / KCTC 32145 / OM5) (Oligotropha carboxidovorans).